A 332-amino-acid chain; its full sequence is Heptahelical transmembrane protein 1 (332 aa).

The segment at 1-52 is disordered; the sequence is MDQNGHNDEAETVSCGNGNCKSKIVPGDDHGGDESSGTKRRKKRKTQQKTMK. Residues 1 to 98 are Cytoplasmic-facing; it reads MDQNGHNDEA…VFSFHNESLN (98 aa). Basic and acidic residues predominate over residues 26 to 37; sequence PGDDHGGDESSG. Over residues 38–52 the composition is skewed to basic residues; that stretch reads TKRRKKRKTQQKTMK. The chain crosses the membrane as a helical span at residues 99–119; sequence VWTHLIGFIFFVALTVANIIH. The Extracellular portion of the chain corresponds to 120–138; the sequence is HDGFFPVDAKSPGNVTRWP. A helical transmembrane segment spans residues 139 to 159; it reads FFVFLGGSMFCLLASSICHLF. Residues 160-172 lie on the Cytoplasmic side of the membrane; that stretch reads CCHSKELNVFLLR. A helical membrane pass occupies residues 173 to 193; that stretch reads IDYAGITAMIITSFFPPIFYI. Residues 194–199 lie on the Extracellular side of the membrane; sequence FQCTPR. Residues 200–220 traverse the membrane as a helical segment; it reads WYFIYLAGITSMGIFTIITLF. The Cytoplasmic portion of the chain corresponds to 221-233; it reads TPSLSAPKYRAFR. Residues 234 to 254 form a helical membrane-spanning segment; sequence ALLFASMGLFGIVPAAHALVV. The Extracellular portion of the chain corresponds to 255–262; the sequence is NWGNPQRN. The chain crosses the membrane as a helical span at residues 263–283; that stretch reads VTLVYELLMAVFYLVGTGFYV. The Cytoplasmic segment spans residues 284-303; it reads GRVPERLKPGWFDRVGHSHQ. The chain crosses the membrane as a helical span at residues 304 to 324; it reads IFHVFVLLGALSHYAAALLFL. The Extracellular portion of the chain corresponds to 325–332; it reads DWRDHVGC.

Belongs to the ADIPOR family. As to quaternary structure, interacts (via N-terminus) with SCRM/ICE1. As to expression, expressed in roots, hypocotyls, vasculature of cotyledons and leaves, hydathodes and guard cells. In reproductive organs, expressed in trichomes, veins of sepals, stamens and stigmata of pistils.

It localises to the membrane. In terms of biological role, may act as a negative regulator of abscisic acid (ABA)-mediated osmotic stress signaling and function in cross-talk between cold and osmotic signaling. This chain is Heptahelical transmembrane protein 1 (HHP1), found in Arabidopsis thaliana (Mouse-ear cress).